Reading from the N-terminus, the 156-residue chain is 3-hydroxyacyl-[acyl-carrier-protein] dehydratase FabZ (156 aa).

The active site involves H54.

Belongs to the thioester dehydratase family. FabZ subfamily.

It is found in the cytoplasm. The catalysed reaction is a (3R)-hydroxyacyl-[ACP] = a (2E)-enoyl-[ACP] + H2O. Involved in unsaturated fatty acids biosynthesis. Catalyzes the dehydration of short chain beta-hydroxyacyl-ACPs and long chain saturated and unsaturated beta-hydroxyacyl-ACPs. The chain is 3-hydroxyacyl-[acyl-carrier-protein] dehydratase FabZ from Koribacter versatilis (strain Ellin345).